The following is a 681-amino-acid chain: MRKKLFGQLQRIGKALMLPVAILPAAGLLLAIGTAMQGEALQHYLPFIQNGGVQTVAKLMTGAGGIIFDNLPMIFALGVAIGLAGGDGVAAIAAFVGYIIMNKTMGDFLQVTPKNIGDPASGYASILGIPTLQTGVFGGIIIGALAAWCYNKFYNINLPSYLGFFAGKRFVPIMMATTSFILAFPMALIWPTIQTGLNAFSTGLLDSNTGVAVFLFGFIKRLLIPFGLHHIFHAPFWFEFGSWKNAAGEIIHGDQRIFIEQIREGAHLTAGKFMQGEFPVMMFGLPAAALAIYHTAKPENKKVVAGLMGSAALTSFLTGITEPLEFSFLFVAPLLFFIHAVLDGLSFLTLYLLDLHLGYTFSGGFIDYFLLGILPNKTQWWLVIPVGLVYAVIYYFVFRFLIVKLKYKTPGREDKQSQAATASATELPYAVLEAMGGKANIKHLDACITRLRVEVNDKSKVDVPGLKDLGASGVLEVGNNMQAIFGPKSDQIKHEMQQIMNGQVVENPTTMEDDKDETVVVAEDKSATSELSHIVHAPLTGEVTPLSEVPDQVFSEKMMGDGIAIKPSQGEVRAPFNGKVQMIFPTKHAIGLVSDSGLELLIHIGLDTVKLNGEGFTLHVEEGQEVKQGDLLINFDLDYIRNHAKSDITPIIVTQGNITNLDFKQGEHGNISFGDQLFEAK.

The 412-residue stretch at 3–414 (KKLFGQLQRI…LKYKTPGRED (412 aa)) folds into the PTS EIIC type-1 domain. 10 consecutive transmembrane segments (helical) span residues 16-36 (LMLPVAILPAAGLLLAIGTAM), 73-93 (MIFALGVAIGLAGGDGVAAIA), 126-146 (ILGIPTLQTGVFGGIIIGALA), 170-190 (FVPIMMATTSFILAFPMALIW), 199-219 (AFSTGLLDSNTGVAVFLFGFI), 273-293 (FMQGEFPVMMFGLPAAALAIY), 303-323 (VVAGLMGSAALTSFLTGITEP), 328-348 (FLFVAPLLFFIHAVLDGLSFL), 355-375 (LHLGYTFSGGFIDYFLLGILP), and 383-403 (VIPVGLVYAVIYYFVFRFLIV). The 82-residue stretch at 425-506 (TELPYAVLEA…QQIMNGQVVE (82 aa)) folds into the PTS EIIB type-1 domain. Cysteine 447 functions as the Phosphocysteine intermediate; for EIIB activity in the catalytic mechanism. The PTS EIIA type-1 domain occupies 551 to 655 (DQVFSEKMMG…SDITPIIVTQ (105 aa)). Histidine 603 serves as the catalytic Tele-phosphohistidine intermediate; for EIIA activity.

The protein localises to the cell membrane. It carries out the reaction N(pros)-phospho-L-histidyl-[protein] + D-glucose(out) = D-glucose 6-phosphate(in) + L-histidyl-[protein]. The phosphoenolpyruvate-dependent sugar phosphotransferase system (sugar PTS), a major carbohydrate active transport system, catalyzes the phosphorylation of incoming sugar substrates concomitantly with their translocation across the cell membrane. This system is involved in glucose transport. In Staphylococcus aureus (strain MRSA252), this protein is PTS system glucose-specific EIICBA component (ptsG).